Reading from the N-terminus, the 335-residue chain is Cathepsin B-like cysteine proteinase 4 (335 aa).

The signal sequence occupies residues 1 to 15; that stretch reads MKYLILAALVAVTAG. The propeptide occupies 16–80; sequence LVIPLVPKTQ…VVKHDINEDT (65 aa). Disulfide bonds link cysteine 94–cysteine 123, cysteine 106–cysteine 150, cysteine 142–cysteine 209, cysteine 143–cysteine 146, cysteine 179–cysteine 213, and cysteine 187–cysteine 199. The active site involves cysteine 109. N-linked (GlcNAc...) asparagine glycosylation occurs at asparagine 193. Catalysis depends on residues histidine 281 and asparagine 301.

This sequence belongs to the peptidase C1 family.

It is found in the secreted. Thiol protease which shows activity against the fluorogenic substrate z-Arg-Arg-AMC. This Caenorhabditis elegans protein is Cathepsin B-like cysteine proteinase 4 (cpr-4).